Consider the following 318-residue polypeptide: Epithelial-stromal interaction protein 1 (318 aa).

Residues 1 to 60 (MNTRNRVVNSGLGASPASRPTRDPQDPSGRQGELSPVEDQREGLEAAPKGPSRESVVHAG) form a disordered region. 2 coiled-coil regions span residues 73–188 (NINR…HQQY) and 240–280 (LKAE…HQTE).

In terms of tissue distribution, highly expressed in placenta, small intestine, spleen, kidney, thymus, liver, salivary gland and testes. Weakly expressed in breast, skeletal muscle and colon. Highly expressed in breast cancer upon interaction between tumor cells and stromal cells in vitro. Expressed in blood mononuclear cells from patients with systemic lupus erythematosus (SLE).

In terms of biological role, plays a role in M1 macrophage polarization and is required for the proper regulation of gene expression during M1 versus M2 macrophage differentiation. Might play a role in RELA/p65 and STAT1 phosphorylation and nuclear localization upon activation of macrophages. In Homo sapiens (Human), this protein is Epithelial-stromal interaction protein 1 (EPSTI1).